The following is a 330-amino-acid chain: Aspartate--ammonia ligase (330 aa).

This sequence belongs to the class-II aminoacyl-tRNA synthetase family. AsnA subfamily.

It is found in the cytoplasm. The enzyme catalyses L-aspartate + NH4(+) + ATP = L-asparagine + AMP + diphosphate + H(+). It functions in the pathway amino-acid biosynthesis; L-asparagine biosynthesis; L-asparagine from L-aspartate (ammonia route): step 1/1. This chain is Aspartate--ammonia ligase, found in Streptococcus thermophilus (strain CNRZ 1066).